The following is a 120-amino-acid chain: NAD(P)H-quinone oxidoreductase subunit 3, chloroplastic (120 aa).

3 consecutive transmembrane segments (helical) span residues I9–G29, M64–M84, and V88–S108.

It belongs to the complex I subunit 3 family. As to quaternary structure, NDH is composed of at least 16 different subunits, 5 of which are encoded in the nucleus.

It is found in the plastid. Its subcellular location is the chloroplast thylakoid membrane. It carries out the reaction a plastoquinone + NADH + (n+1) H(+)(in) = a plastoquinol + NAD(+) + n H(+)(out). It catalyses the reaction a plastoquinone + NADPH + (n+1) H(+)(in) = a plastoquinol + NADP(+) + n H(+)(out). NDH shuttles electrons from NAD(P)H:plastoquinone, via FMN and iron-sulfur (Fe-S) centers, to quinones in the photosynthetic chain and possibly in a chloroplast respiratory chain. The immediate electron acceptor for the enzyme in this species is believed to be plastoquinone. Couples the redox reaction to proton translocation, and thus conserves the redox energy in a proton gradient. The protein is NAD(P)H-quinone oxidoreductase subunit 3, chloroplastic of Lemna minor (Common duckweed).